We begin with the raw amino-acid sequence, 468 residues long: Monogalactosyldiacylglycerol synthase 2, chloroplastic (468 aa).

UDP-binding positions include histidine 82, arginine 251, 361–365 (GTIAE), and glutamate 383.

This sequence belongs to the glycosyltransferase 28 family. As to expression, expressed mainly in floral buds. Detected in roots, leaves, stems, siliques and pollen tubes.

It is found in the plastid. It localises to the chloroplast outer membrane. The enzyme catalyses a 1,2-diacyl-sn-glycerol + UDP-alpha-D-galactose = a 1,2-diacyl-3-O-(beta-D-galactosyl)-sn-glycerol + UDP + H(+). It catalyses the reaction 1,2-di-(9Z,12Z-octadecadienoyl)-sn-glycerol + UDP-alpha-D-galactose = 1,2-di-(9Z,12Z-octadecadienoyl)-3-beta-D-galactosyl-sn-glycerol + UDP + H(+). The catalysed reaction is 1-(9Z-octadecenoyl)-2-hexadecanoyl-sn-glycerol + UDP-alpha-D-galactose = 1-(9Z-octadecenoyl)-2-hexadecanoyl-3-beta-D-galactosyl-sn-glycerol + UDP + H(+). It carries out the reaction 1,2-di-(9Z-octadecenoyl)-sn-glycerol + UDP-alpha-D-galactose = 1,2-di-(9Z-octadecenoyl)-3-beta-D-galactosyl-sn-glycerol + UDP + H(+). Inhibited by galvestine-1. In terms of biological role, involved in the synthesis of monogalactosyldiacylglycerol, the major structural component of photosynthetic membranes and in the chloroplast envelope biogenesis. Can use both prokaryotic (18:1/16:0) or eukaryotic (18:2/18:2) 1,2-diacylglycerol species, but operates with some preference for the eukaryotic one. Plays a minor role in galactolipid synthesis in chloroplasts. Is required for membrane lipid remodeling in phosphate-starved roots. Acts as the minor factor involved in digalactosyldiacylglycerol (DGDG) biosynthesis in phosphate-starved roots. Does not seem to be required for plant growth under nutrient-sufficient conditions. Required for membrane lipid remodeling in plants grown in acidic conditions. The polypeptide is Monogalactosyldiacylglycerol synthase 2, chloroplastic (Arabidopsis thaliana (Mouse-ear cress)).